We begin with the raw amino-acid sequence, 587 residues long: Folylpolyglutamate synthase, mitochondrial (587 aa).

A mitochondrion-targeting transit peptide spans 1–42 (MSRARSHLRAALFLAAASARGITTQVAARRGLSAWPVPQEPS). Methionine 43 carries the post-translational modification N-acetylmethionine. 106 to 109 (GKGS) contacts ATP. Mg(2+) contacts are provided by serine 130, glutamate 200, and histidine 228. ATP contacts are provided by arginine 363 and aspartate 377. Phosphoserine is present on serine 539.

This sequence belongs to the folylpolyglutamate synthase family. In terms of assembly, monomer. K(+) is required as a cofactor. The cofactor is NH4(+).

It localises to the mitochondrion inner membrane. Its subcellular location is the mitochondrion matrix. The protein localises to the cytoplasm. The enzyme catalyses (6S)-5,6,7,8-tetrahydrofolyl-(gamma-L-Glu)(n) + L-glutamate + ATP = (6S)-5,6,7,8-tetrahydrofolyl-(gamma-L-Glu)(n+1) + ADP + phosphate + H(+). It participates in cofactor biosynthesis; tetrahydrofolylpolyglutamate biosynthesis. Its activity is regulated as follows. Activated by 10 mM sodium bicarbonate. In terms of biological role, catalyzes conversion of folates to polyglutamate derivatives allowing concentration of folate compounds in the cell and the intracellular retention of these cofactors, which are important substrates for most of the folate-dependent enzymes that are involved in one-carbon transfer reactions involved in purine, pyrimidine and amino acid synthesis. Unsubstituted reduced folates are the preferred substrates. Metabolizes methotrexate (MTX) to polyglutamates. In Homo sapiens (Human), this protein is Folylpolyglutamate synthase, mitochondrial (FPGS).